A 525-amino-acid polypeptide reads, in one-letter code: GMP synthase [glutamine-hydrolyzing] (525 aa).

Residues 9 to 207 (RILILDFGSQ…VLDICRCTPL (199 aa)) enclose the Glutamine amidotransferase type-1 domain. Cys-86 (nucleophile) is an active-site residue. Residues His-181 and Glu-183 contribute to the active site. The 193-residue stretch at 208–400 (WTPAKIIEDA…LGLPYDMLYR (193 aa)) folds into the GMPS ATP-PPase domain. 235 to 241 (SGGVDSS) contributes to the ATP binding site.

Homodimer.

The catalysed reaction is XMP + L-glutamine + ATP + H2O = GMP + L-glutamate + AMP + diphosphate + 2 H(+). The protein operates within purine metabolism; GMP biosynthesis; GMP from XMP (L-Gln route): step 1/1. Its function is as follows. Catalyzes the synthesis of GMP from XMP. This Sodalis glossinidius (strain morsitans) protein is GMP synthase [glutamine-hydrolyzing].